Consider the following 302-residue polypeptide: Nitric oxide synthase-interacting protein (302 aa).

At Ser36 the chain carries Phosphoserine. Positions 55-75 (DPVVTPDGYLYEREAILEYIL) are U-box-like. Residues 78–101 (KKEIARQMKAYEKQRGARREEQKE) carry the Nuclear localization signal motif. Residues 126-156 (LNPFTPKAASAGNGPDDAQPGSSAGPAGKDK) are disordered.

Belongs to the NOSIP family. In terms of assembly, interacts with NOS1 and NOS3. Interacts with PP2A holoenzyme, containing PPP2CA, PPP2CB, PPP2R1A and PPP2R2A subunits.

The protein resides in the cytoplasm. Its subcellular location is the nucleus. It carries out the reaction S-ubiquitinyl-[E2 ubiquitin-conjugating enzyme]-L-cysteine + [acceptor protein]-L-lysine = [E2 ubiquitin-conjugating enzyme]-L-cysteine + N(6)-ubiquitinyl-[acceptor protein]-L-lysine.. Functionally, E3 ubiquitin-protein ligase that is essential for proper development of the forebrain, the eye, and the face. Catalyzes monoubiquitination of serine/threonine-protein phosphatase 2A (PP2A) catalytic subunit PPP2CA/PPP2CB. Negatively regulates nitric oxide production by inducing NOS1 and NOS3 translocation to actin cytoskeleton and inhibiting their enzymatic activity. The polypeptide is Nitric oxide synthase-interacting protein (NOSIP) (Bos taurus (Bovine)).